A 360-amino-acid polypeptide reads, in one-letter code: MKKTPLADTHEKLGARMVDFAGWYMPVQYIGLREEHNNVRTNVGLFDVSHMGEVRVKGPKALETLEWLTTNDVSKLNDGEAQYSLLPNDQGGLVDDIIVYCLSKDSDYLVCVNASNKDKDFAWMTKHNKGADITDESDLWGQIAIQGPKALELCDRVFDIKVSEMKSFTVKSGTFKGHKIMIATTGYTGEKGCEVFVEAAGTADLWMTLLEKGKDLGCMGIGLGARDTLRTEMKYSLYGHEIDDTTNPYEAGLGWVIKPAKKDFMNKAQIVGKKEAGLTRNLVGFKMLEKGIPRQGYSLFSFDNKEIGKVTSGTHSPTLDEPIGIAFIDVAYAKEGTEFLLDIRGRKVKAVVCKTPFVTK.

This sequence belongs to the GcvT family. In terms of assembly, the glycine cleavage system is composed of four proteins: P, T, L and H.

It carries out the reaction N(6)-[(R)-S(8)-aminomethyldihydrolipoyl]-L-lysyl-[protein] + (6S)-5,6,7,8-tetrahydrofolate = N(6)-[(R)-dihydrolipoyl]-L-lysyl-[protein] + (6R)-5,10-methylene-5,6,7,8-tetrahydrofolate + NH4(+). The glycine cleavage system catalyzes the degradation of glycine. The chain is Aminomethyltransferase from Bdellovibrio bacteriovorus (strain ATCC 15356 / DSM 50701 / NCIMB 9529 / HD100).